Consider the following 241-residue polypeptide: DNA repair protein RecO (241 aa).

The protein belongs to the RecO family.

Involved in DNA repair and RecF pathway recombination. The protein is DNA repair protein RecO of Orientia tsutsugamushi (strain Boryong) (Rickettsia tsutsugamushi).